The following is a 1016-amino-acid chain: Primary septum glucan endo-1,3-beta-D-glucosidase (1016 aa).

Residues 1 to 20 (MSSYLRSFIFGLLTISLAQC) form the signal peptide. Asparagine 37 carries an N-linked (GlcNAc...) asparagine glycan. The segment at 45–272 (TNVFDSVVDT…NGYIQIAKIP (228 aa)) is beta-sandwich subdomain. Residues 45-741 (TNVFDSVVDT…AYAAGLWAND (697 aa)) form the GH81 domain. Positions 273–364 (LGDGTAEALY…AGNSITFAEA (92 aa)) are alpha/beta subdomain. The (alpha/beta)6 barrel subdomain stretch occupies residues 379-741 (GQIGYSEEAL…AYAAGLWAND (363 aa)). Aspartate 492 is an active-site residue. (1,3-beta-D-glucosyl)n is bound by residues histidine 496, aspartate 567, glutamate 569, glutamate 573, and tyrosine 650. Active-site residues include glutamate 569 and glutamate 573. The interval 748–1016 (SSSSTTTTST…GCSNGALVAA (269 aa)) is required for catalytic activity against insoluble beta-glucan and to restrict localization of the enzyme to the cell septum. A disordered region spans residues 844-872 (SSTTSSITPTPTTTSSITPTPTTTSTTTT).

Belongs to the glycosyl hydrolase 81 family.

Its subcellular location is the cell septum. The catalysed reaction is Hydrolysis of (1-&gt;3)-beta-D-glucosidic linkages in (1-&gt;3)-beta-D-glucans.. Functionally, cleaves internal linkages in 1,3-beta-glucan. Has a role in cell separation where it is required for the degradation of the primary septum after completion of cytokinesis. The chain is Primary septum glucan endo-1,3-beta-D-glucosidase from Schizosaccharomyces pombe (strain 972 / ATCC 24843) (Fission yeast).